A 151-amino-acid polypeptide reads, in one-letter code: Small ribosomal subunit protein uS19 (151 aa).

It belongs to the universal ribosomal protein uS19 family.

In terms of biological role, protein S19 forms a complex with S13 that binds strongly to the 16S ribosomal RNA. This chain is Small ribosomal subunit protein uS19 (rps19), found in Thermoplasma acidophilum (strain ATCC 25905 / DSM 1728 / JCM 9062 / NBRC 15155 / AMRC-C165).